Here is a 309-residue protein sequence, read N- to C-terminus: tRNA pseudouridine synthase B (309 aa).

The active-site Nucleophile is Asp-39.

This sequence belongs to the pseudouridine synthase TruB family. Type 1 subfamily.

The catalysed reaction is uridine(55) in tRNA = pseudouridine(55) in tRNA. Functionally, responsible for synthesis of pseudouridine from uracil-55 in the psi GC loop of transfer RNAs. The protein is tRNA pseudouridine synthase B of Bacillus subtilis (strain 168).